We begin with the raw amino-acid sequence, 484 residues long: Aldehyde dehydrogenase family 3 member H1 (484 aa).

NAD(+) is bound at residue 196–201 (GSSKIG). Residue E218 is the Proton acceptor of the active site. The Nucleophile role is filled by C253.

It belongs to the aldehyde dehydrogenase family. In terms of assembly, homodimer and homomultimer. In terms of tissue distribution, isoform alpha is expressed in expanded leaves and flowers. Detected in seedlings. Isoform beta is mainly expressed in flowers. Detected in leaves and seedlings.

The enzyme catalyses an aldehyde + NAD(+) + H2O = a carboxylate + NADH + 2 H(+). Its activity is regulated as follows. Thiol-based regulation. Inactivation after dimerization under oxidizing conditions. Functionally, involved in oxidative stress tolerance by detoxifying reactive aldehydes derived from lipid peroxidation. Medium- to long-chain saturated aldehydes are preferred substrates, while the short-chain aldehyde propanal is a weak substrate. Is strictely NAD(+) specific. The protein is Aldehyde dehydrogenase family 3 member H1 (ALDH3H1) of Arabidopsis thaliana (Mouse-ear cress).